The sequence spans 293 residues: 33 kDa chaperonin (293 aa).

2 cysteine pairs are disulfide-bonded: Cys-238–Cys-240 and Cys-271–Cys-274.

It belongs to the HSP33 family. Post-translationally, under oxidizing conditions two disulfide bonds are formed involving the reactive cysteines. Under reducing conditions zinc is bound to the reactive cysteines and the protein is inactive.

The protein resides in the cytoplasm. Functionally, redox regulated molecular chaperone. Protects both thermally unfolding and oxidatively damaged proteins from irreversible aggregation. Plays an important role in the bacterial defense system toward oxidative stress. This is 33 kDa chaperonin from Staphylococcus aureus (strain USA300).